Reading from the N-terminus, the 186-residue chain is Elongation factor P (186 aa).

It belongs to the elongation factor P family.

The protein localises to the cytoplasm. It participates in protein biosynthesis; polypeptide chain elongation. In terms of biological role, involved in peptide bond synthesis. Stimulates efficient translation and peptide-bond synthesis on native or reconstituted 70S ribosomes in vitro. Probably functions indirectly by altering the affinity of the ribosome for aminoacyl-tRNA, thus increasing their reactivity as acceptors for peptidyl transferase. This chain is Elongation factor P, found in Crocosphaera subtropica (strain ATCC 51142 / BH68) (Cyanothece sp. (strain ATCC 51142)).